We begin with the raw amino-acid sequence, 258 residues long: uncharacterized protein (258 aa).

This is an uncharacterized protein from Methanocaldococcus jannaschii (strain ATCC 43067 / DSM 2661 / JAL-1 / JCM 10045 / NBRC 100440) (Methanococcus jannaschii).